A 72-amino-acid polypeptide reads, in one-letter code: Conotoxin TxMMSK-04 (72 aa).

The first 20 residues, 1–20, serve as a signal peptide directing secretion; that stretch reads MMSKLGVLLTICLLLFPLTA. Residues 21-51 constitute a propeptide that is removed on maturation; the sequence is VPLDGDQPADRPAERMQDGISSEHHPFFDSV. At Gln55 the chain carries Pyrrolidone carboxylic acid. Cystine bridges form between Cys57–Cys71, Cys58–Cys67, and Cys63–Cys70. Pro69 carries the post-translational modification 4-hydroxyproline. Cys71 bears the Cysteine amide mark.

Belongs to the conotoxin M superfamily. Expressed by the venom duct.

It is found in the secreted. The chain is Conotoxin TxMMSK-04 from Conus textile (Cloth-of-gold cone).